The sequence spans 153 residues: Mitotic-spindle organizing protein 2 (153 aa).

The interval 80 to 153 is disordered; sequence KVSETSTGDA…SSSSSQLTSN (74 aa). 2 stretches are compositionally biased toward polar residues: residues 81–99 and 107–133; these read VSETSTGDASSTSHTTAVP and KMSSGQGEKSARESSSQRVPRQVSATR. Residues 134-153 show a composition bias toward low complexity; sequence GQKSTKSSGSSSSSSQLTSN.

It belongs to the MOZART2 family. In terms of assembly, part of the gamma-tubulin complex. Interacts with TUBG1.

It localises to the cytoplasm. Its subcellular location is the cytoskeleton. It is found in the microtubule organizing center. The protein localises to the centrosome. The protein resides in the spindle. The chain is Mitotic-spindle organizing protein 2 (mzt2) from Danio rerio (Zebrafish).